The sequence spans 287 residues: mRNA-capping enzyme regulatory subunit OPG124 (287 aa).

The protein belongs to the orthopoxvirus mRNA-capping enzyme regulatory subunit family. As to quaternary structure, interacts with the catalytic subunit OPG113.

It is found in the virion. In terms of biological role, regulatory subunit of the mRNA cap enzyme which stabilizes the catalytic subunit and enhances its methyltransferase activity through an allosteric mechanism. Heterodimeric mRNA capping enzyme catalyzes the linkage of a N7-methyl-guanosine moiety to the first transcribed nucleotide (cap 0 structure), whereas the methyltransferase OPG102 is responsible for a second methylation at the 2'-O position of the ribose (cap 1 structure). Also involved in early viral gene transcription termination and intermediate viral gene transcription initiation. Early gene transcription termination requires the termination factor VTF, the DNA-dependent ATPase NPH-I/OPG123 and the RAP94/OPG109 subunit of the viral RNA polymerase, as well as the presence of a specific termination motif. Binds, together with RAP94/OPG109, to the termination motif 5'-UUUUUNU-3' in the nascent early mRNA. This chain is mRNA-capping enzyme regulatory subunit OPG124 (OPG124), found in Variola virus (isolate Human/India/Ind3/1967) (VARV).